Reading from the N-terminus, the 359-residue chain is 4-galactosyl-N-acetylglucosaminide 3-alpha-L-fucosyltransferase FUT6 (359 aa).

Topologically, residues 1-14 (MDPLGPAKTQWSWR) are cytoplasmic. A helical; Signal-anchor for type II membrane protein membrane pass occupies residues 15 to 34 (CCLTALLFQLLVAVCFFSYL). The Lumenal portion of the chain corresponds to 35-359 (RVSRDDPTVY…QTRSIAAWFT (325 aa)). The segment at 73–112 (KPIALPRCSEMVPGTADCNITADRKVYPQADAVIVHHREV) is determines site-specific fucosylation. N91, N153, and N184 each carry an N-linked (GlcNAc...) asparagine glycan.

It belongs to the glycosyltransferase 10 family. Homodimer and monomer. Monomer (secreted form). In terms of processing, N-glycosylated. Proteolytic cleavage releases a secreted glycoform of 43 kDa.

It is found in the golgi apparatus. Its subcellular location is the golgi stack membrane. It localises to the secreted. The enzyme catalyses a beta-D-galactosyl-(1-&gt;4)-N-acetyl-beta-D-glucosaminyl derivative + GDP-beta-L-fucose = a beta-D-galactosyl-(1-&gt;4)-[alpha-L-fucosyl-(1-&gt;3)]-N-acetyl-beta-D-glucosaminyl derivative + GDP + H(+). It carries out the reaction an N-acetyl-alpha-neuraminyl-(2-&gt;3)-beta-D-galactosyl-(1-&gt;4)-N-acetyl-beta-D-glucosaminyl derivative + GDP-beta-L-fucose = an alpha-Neu5Ac-(2-&gt;3)-beta-D-Gal-(1-&gt;4)-[alpha-L-Fuc-(1-&gt;3)]-beta-D-GlcNAc derivative + GDP + H(+). The catalysed reaction is an alpha-Neu5Ac-(2-&gt;3)-beta-D-Gal-(1-&gt;4)-beta-D-GlcNAc-(1-&gt;3)-beta-D-Gal-(1-&gt;4)-[alpha-L-Fuc-(1-&gt;3)]-beta-D-GlcNAc derivative + GDP-beta-L-fucose = an alpha-Neu5Ac-(2-&gt;3)-beta-D-Gal-(1-&gt;4)-[alpha-L-Fuc-(1-&gt;3)]-beta-D-GlcNAc-(1-&gt;3)-beta-D-Gal-(1-&gt;4)-[alpha-L-Fuc-(1-&gt;3)]-beta-D-GlcNAc derivative + GDP + H(+). It catalyses the reaction a neolactoside nLc6Cer + GDP-beta-L-fucose = beta-D-Gal-(1-&gt;4)-[alpha-L-Fuc-(1-&gt;3)]-beta-D-GlcNAc-(1-&gt;3)-beta-D-Gal-(1-&gt;4)-beta-D-GlcNAc-(1-&gt;3)-beta-D-Gal-(1-&gt;4)-beta-D-Glc-(1&lt;-&gt;1')-Cer + GDP + H(+). The enzyme catalyses a neolactoside nLc6Cer + GDP-beta-L-fucose = beta-D-galactosyl-(1-&gt;4)-N-acetyl-beta-D-glucosaminyl-(1-&gt;3)-beta-D-galactosyl-(1-&gt;4)-[alpha-L-fucosyl-(1-&gt;3)]-N-acetyl-beta-D-glucosaminyl-(1-&gt;3)-beta-D-galactosyl-(1-&gt;4)-beta-D-glucosyl-(1&lt;-&gt;1')-ceramide + GDP + H(+). It carries out the reaction a neolactoside VI(3)-alpha-NeuNAc-nLc6Cer + GDP-beta-L-fucose = a neolactoside VI(3)-alpha-NeuAc,V(3)-alphaFuc-nLc6Cer + GDP + H(+). The catalysed reaction is beta-D-galactosyl-(1-&gt;4)-N-acetyl-D-glucosamine + GDP-beta-L-fucose = beta-D-galactosyl-(1-&gt;4)-[alpha-L-fucosyl-(1-&gt;3)]-N-acetyl-D-glucosamine + GDP + H(+). It catalyses the reaction N-acetyl-alpha-neuraminosyl-(2-&gt;3)-beta-D-galactosyl-(1-&gt;4)-N-acetyl-beta-D-glucosamine + GDP-beta-L-fucose = N-acetyl-alpha-neuraminosyl-(2-&gt;3)-beta-D-galactosyl-(1-&gt;4)-[alpha-L-fucosyl-(1-&gt;3)]-N-acetyl-beta-D-glucosamine + GDP + H(+). The enzyme catalyses lactose + GDP-beta-L-fucose = beta-D-galactosyl-(1-&gt;4)-[alpha-L-fucosyl-(1-&gt;3)]-D-glucose + GDP + H(+). It carries out the reaction alpha-L-Fuc-(1-&gt;2)-beta-D-Gal-(1-&gt;4)-D-Glc + GDP-beta-L-fucose = alpha-L-Fuc-(1-&gt;2)-beta-D-Gal-(1-&gt;4)-[alpha-L-Fuc-(1-&gt;3)]-D-Glc + GDP + H(+). The catalysed reaction is a beta-D-galactosyl-(1-&gt;4)-N-acetyl-beta-D-6-sulfooxy-glucosaminyl derivative + GDP-beta-L-fucose = a beta-D-galactosyl-(1-&gt;4)-[alpha-L-fucosyl-(1-&gt;3)]-N-acetyl-beta-D-6-sulfooxy-glucosaminyl derivative + GDP + H(+). It functions in the pathway protein modification; protein glycosylation. Functionally, catalyzes the transfer of L-fucose, from a guanosine diphosphate-beta-L-fucose, to the N-acetyl glucosamine (GlcNAc) of a distal alpha2,3 sialylated lactosamine unit of a glycoprotein- or glycolipid-linked sialopolylactosamines chain or of a distal or internal lactosamine unit of a neutral glycoprotein- or glycolipid-linked polylactosamines chain through an alpha-1,3 glycosidic linkage and participates in surface expression of the sialyl Lewis X (sLe(x)), Lewis X (Le(x)) and non sialylated VIM2 determinants. Moreover transfers fucose to H-type 2 (Fucalpha1-2Galbeta1-4GlcNAc) chain acceptor substrates and participates in difucosylated sialyl Lewis x determinants. Also fucosylates a polylactosamine substrate having a 6 sulfate modification at the GlcNAc moiety and gives rise to sialyl and non-sialyl 6-sulfo lewis X. Does not have activity towards type 1 ((Galbeta1-3GlcNAc)) and H-type 1 chain (Fucalpha1-2Galbeta1-3GlcNAc) acceptors substrates. The sequence is that of 4-galactosyl-N-acetylglucosaminide 3-alpha-L-fucosyltransferase FUT6 from Pongo pygmaeus (Bornean orangutan).